A 482-amino-acid polypeptide reads, in one-letter code: Glutamyl-tRNA(Gln) amidotransferase subunit A (482 aa).

Residues Lys-74 and Ser-149 each act as charge relay system in the active site. The active-site Acyl-ester intermediate is the Ser-173.

It belongs to the amidase family. GatA subfamily. Heterotrimer of A, B and C subunits.

It catalyses the reaction L-glutamyl-tRNA(Gln) + L-glutamine + ATP + H2O = L-glutaminyl-tRNA(Gln) + L-glutamate + ADP + phosphate + H(+). Functionally, allows the formation of correctly charged Gln-tRNA(Gln) through the transamidation of misacylated Glu-tRNA(Gln) in organisms which lack glutaminyl-tRNA synthetase. The reaction takes place in the presence of glutamine and ATP through an activated gamma-phospho-Glu-tRNA(Gln). This Prochlorococcus marinus (strain MIT 9215) protein is Glutamyl-tRNA(Gln) amidotransferase subunit A.